A 1862-amino-acid chain; its full sequence is Transient receptor potential cation channel subfamily M member 7 (1862 aa).

N-acetylmethionine is present on M1. Topologically, residues 1–850 (MSQKSWIEST…ITRKFYAFYH (850 aa)) are cytoplasmic. S101 carries the post-translational modification Phosphoserine. Over residues 544–554 (NRRSGRNASSS) the composition is skewed to low complexity. Residues 544–574 (NRRSGRNASSSTPQLRKSHETFGNRADKKEK) form a disordered region. The span at 560–573 (KSHETFGNRADKKE) shows a compositional bias: basic and acidic residues. Residues 851 to 876 (APIVKFWFNTLAYLGFLMLYTFVVLV) traverse the membrane as a helical segment. At 877-882 (QMEQLP) the chain is on the extracellular side. A helical membrane pass occupies residues 883-904 (SVQEWIVIAYIFTYAIEKIREV). Topologically, residues 905–923 (FMSEAGKISQKIKVWFSDY) are cytoplasmic. A helical transmembrane segment spans residues 924–943 (FNVSDTIAIISFFVGFGLRF). The Extracellular segment spans residues 944–956 (GAKWNYINAYDNH). The chain crosses the membrane as a helical span at residues 957 to 980 (VFVAGRLIYCLNIIFWYVRLLDFL). Topologically, residues 981 to 999 (AVNQQAGPYVMMIGKMVAN) are cytoplasmic. The helical transmembrane segment at 1000–1023 (MFYIVVIMALVLLSFGVPRKAILY) threads the bilayer. Residues 1024–1025 (PH) lie on the Extracellular side of the membrane. The pore-forming intramembrane region spans 1026 to 1066 (EEPSWSLAKDIVFHPYWMIFGEVYAYEIDVCANDSALPTIC). Residues 1067–1069 (GPG) are Extracellular-facing. Residues 1070–1098 (TWLTPFLQAVYLFVQYIIMVNLLIAFFNN) traverse the membrane as a helical segment. At 1099–1862 (VYLQVKAISN…EATNSVRLML (764 aa)) the chain is on the cytoplasmic side. S-palmitoyl cysteine attachment occurs at residues C1143, C1144, and C1146. A Phosphothreonine modification is found at T1163. A phosphoserine mark is found at S1191, S1193, S1224, S1255, and S1258. Positions 1198 to 1250 (RVTFERVEQMSIQIKEVGDRVNYIKRSLQSLDSQIGHLQDLSALTVDTLKTLT) form a coiled coil. T1265 is modified (phosphothreonine). A phosphoserine mark is found at S1300, S1357, S1360, S1385, S1386, S1389, S1394, S1395, and S1403. The tract at residues 1380-1418 (NQKLGSSPNSSPHMSSPPTKFSVSTPSQPSCKSHLESTT) is disordered. The segment covering 1385 to 1397 (SSPNSSPHMSSPP) has biased composition (low complexity). Residues 1398–1410 (TKFSVSTPSQPSC) show a composition bias toward polar residues. A Phosphothreonine modification is found at T1404. Phosphoserine is present on residues S1406 and S1445. Phosphothreonine is present on T1454. S1455 carries the post-translational modification Phosphoserine. Phosphothreonine occurs at positions 1466 and 1470. Residues 1485–1511 (TPTSLHSEQESCSRRASTEDSPDVDSR) form a disordered region. Residues S1491, S1497, S1501, S1510, and S1530 each carry the phosphoserine modification. Positions 1491-1502 (SEQESCSRRAST) are enriched in basic and acidic residues. T1534 carries the phosphothreonine modification. The residue at position 1540 (S1540) is a Phosphoserine. T1548 is subject to Phosphothreonine. Phosphoserine is present on residues S1564 and S1566. Phosphothreonine is present on T1580. In terms of domain architecture, Alpha-type protein kinase spans 1591–1821 (ILNNSMSSWS…CCRKLKLPDL (231 aa)). 2 positions are modified to phosphoserine: S1595 and S1612. ADP-binding residues include G1618, G1619, L1620, R1621, and K1645. S1657 is subject to Phosphoserine. T1682 bears the Phosphothreonine mark. Positions 1717, 1718, and 1720 each coordinate ADP. H1750 serves as a coordination point for Zn(2+). The Proton acceptor role is filled by D1764. D1774 lines the ADP pocket. S1776 carries the phosphoserine modification. H1807, C1809, and C1813 together coordinate Zn(2+). A Phosphothreonine modification is found at T1827. Residues 1840 to 1862 (DLNLQAGNSTKESEATNSVRLML) are disordered. Phosphoserine is present on residues S1848 and S1857.

This sequence in the C-terminal section; belongs to the protein kinase superfamily. Alpha-type protein kinase family. ALPK subfamily. It in the N-terminal section; belongs to the transient receptor (TC 1.A.4) family. LTrpC subfamily. TRPM7 sub-subfamily. In terms of assembly, homodimer. Homotetramer. Forms heteromers with TRPM6; heteromeric channels are functionally different from the homomeric channels. Interacts with PLCB1. Zn(2+) serves as cofactor. In terms of processing, palmitoylated; palmitoylation at Cys-1143, Cys-1144 and Cys-1146 promotes TRPM7 trafficking from the Golgi to the surface membrane. Post-translationally, autophosphorylated; autophosphorylation regulates TRPM7 kinase activity towards its substrates. The C-terminal kinase domain can be cleaved from the channel segment in a cell-type-specific fashion. TRPM7 is cleaved by caspase-8, dissociating the kinase from the ion-conducting pore. The cleaved kinase fragments (M7CKs) can translocate to the cell nucleus and binds chromatin-remodeling complex proteins in a Zn(2+)-dependent manner to ultimately phosphorylate specific Ser/Thr residues of histones.

The protein resides in the cell membrane. It is found in the cytoplasmic vesicle membrane. The protein localises to the nucleus. It carries out the reaction L-seryl-[protein] + ATP = O-phospho-L-seryl-[protein] + ADP + H(+). It catalyses the reaction L-threonyl-[protein] + ATP = O-phospho-L-threonyl-[protein] + ADP + H(+). The catalysed reaction is Mg(2+)(in) = Mg(2+)(out). The enzyme catalyses Ca(2+)(in) = Ca(2+)(out). It carries out the reaction Zn(2+)(in) = Zn(2+)(out). Channel displays constitutive activity. Channel activity is negatively regulated by cytosolic Mg(2+), Mg-ATP, low intracellular pH. Resting free cytosolic Mg(2+) and Mg-ATP concentrations seem to be sufficient to block native TRPM7 channel activity. TRPM7 channel activity is highly dependent on membrane levels of phosphatidylinositol 4,5 bisphosphate (PIP2). PIP2 hydrolysis negatively regulates TRPM7 channel activity. TRPM7 kinase activity does not affect channel activity. The kinase activity is controlled through the autophosphorylation of a serine/threonine-rich region located N-terminal to the catalytic domain. In terms of biological role, bifunctional protein that combines an ion channel with an intrinsic kinase domain, enabling it to modulate cellular functions either by conducting ions through the pore or by phosphorylating downstream proteins via its kinase domain. The channel is highly permeable to divalent cations, specifically calcium (Ca2+), magnesium (Mg2+) and zinc (Zn2+) and mediates their influx. Controls a wide range of biological processes such as Ca2(+), Mg(2+) and Zn(2+) homeostasis, vesicular Zn(2+) release channel and intracellular Ca(2+) signaling, embryonic development, immune responses, cell motility, proliferation and differentiation. The C-terminal alpha-kinase domain autophosphorylates cytoplasmic residues of TRPM7. TRPM7 phosphorylates SMAD2, suggesting that TRPM7 kinase may play a role in activating SMAD signaling pathways. In vitro, TRPM7 kinase phosphorylates ANXA1 (annexin A1), myosin II isoforms and a variety of proteins with diverse cellular functions. The cleaved channel exhibits substantially higher current and potentiates Fas receptor signaling. Its function is as follows. The C-terminal kinase domain can be cleaved from the channel segment in a cell-type-specific fashion. In immune cells, the TRPM7 kinase domain is clipped from the channel domain by caspases in response to Fas-receptor stimulation. The cleaved kinase fragments can translocate to the nucleus, and bind chromatin-remodeling complex proteins in a Zn(2+)-dependent manner to ultimately phosphorylate specific Ser/Thr residues of histones known to be functionally important for cell differentiation and embryonic development. The sequence is that of Transient receptor potential cation channel subfamily M member 7 from Rattus norvegicus (Rat).